The following is a 106-amino-acid chain: V-type proton ATPase subunit G2 (106 aa).

M1 carries the N-acetylmethionine modification. Residues 31 to 67 (LKQAKEEAETEVAEHKTSTEQGFQRKLEATSGDSGAN) form a disordered region. Positions 33-58 (QAKEEAETEVAEHKTSTEQGFQRKLE) are enriched in basic and acidic residues.

Belongs to the V-ATPase G subunit family. As to quaternary structure, V-ATPase is a heteromultimeric enzyme composed of a peripheral catalytic V1 complex (components A to H) attached to an integral membrane V0 proton pore complex (components: a, c, c'', d and e).

The protein resides in the vacuole membrane. Functionally, catalytic subunit of the peripheral V1 complex of vacuolar ATPase (V-ATPase). V-ATPase is responsible for acidifying a variety of intracellular compartments in eukaryotic cells. The sequence is that of V-type proton ATPase subunit G2 (VHA-G2) from Arabidopsis thaliana (Mouse-ear cress).